Reading from the N-terminus, the 370-residue chain is Cytochrome b (370 aa).

4 helical membrane passes run 25–45 (FGSM…FLAV), 69–90 (WLMQ…YIHI), 105–125 (WLSG…GYVL), and 170–190 (FFAL…LHVI). Heme b contacts are provided by His75 and His89. 2 residues coordinate heme b: His174 and His188. His193 is a binding site for a ubiquinone. A run of 4 helical transmembrane segments spans residues 218 to 238 (YKDL…VSFS), 280 to 300 (LGGA…PFTH), 312 to 332 (FMQM…WTAT), and 339 to 358 (FTLI…ISNP).

The protein belongs to the cytochrome b family. In terms of assembly, the cytochrome bc1 complex contains 3 respiratory subunits (MT-CYB, CYC1 and UQCRFS1), 2 core proteins (UQCRC1 and UQCRC2) and probably 6 low-molecular weight proteins. The cofactor is heme b.

The protein localises to the mitochondrion inner membrane. Its function is as follows. Component of the ubiquinol-cytochrome c reductase complex (complex III or cytochrome b-c1 complex) that is part of the mitochondrial respiratory chain. The b-c1 complex mediates electron transfer from ubiquinol to cytochrome c. Contributes to the generation of a proton gradient across the mitochondrial membrane that is then used for ATP synthesis. In Eunectes murinus (Green anaconda), this protein is Cytochrome b (MT-CYB).